The chain runs to 66 residues: Large ribosomal subunit protein bL33c (66 aa).

It belongs to the bacterial ribosomal protein bL33 family.

The protein localises to the plastid. Its subcellular location is the chloroplast. This is Large ribosomal subunit protein bL33c from Phalaenopsis aphrodite subsp. formosana (Moth orchid).